The sequence spans 70 residues: MIYKVLYQKDKIQNPRRETTQTLYLEAPSAVEARALVEKNTPYNIEFIQELSGNFLEYEEKSANFKLTTF.

This sequence belongs to the RNA polymerase subunit epsilon family. In terms of assembly, RNAP is composed of a core of 2 alpha, a beta and a beta' subunit. The core is associated with a delta subunit, and at least one of epsilon or omega. When a sigma factor is associated with the core the holoenzyme is formed, which can initiate transcription.

It catalyses the reaction RNA(n) + a ribonucleoside 5'-triphosphate = RNA(n+1) + diphosphate. Its function is as follows. A non-essential component of RNA polymerase (RNAP). The polypeptide is DNA-directed RNA polymerase subunit epsilon (Lacticaseibacillus casei (strain BL23) (Lactobacillus casei)).